The chain runs to 274 residues: Diaminopimelate epimerase (274 aa).

Positions 11, 44, and 64 each coordinate substrate. Cysteine 73 functions as the Proton donor in the catalytic mechanism. Substrate-binding positions include 74 to 75, asparagine 157, asparagine 190, and 208 to 209; these read GN and ER. The active-site Proton acceptor is the cysteine 217. 218–219 serves as a coordination point for substrate; that stretch reads GS.

Belongs to the diaminopimelate epimerase family. Homodimer.

The protein localises to the cytoplasm. The enzyme catalyses (2S,6S)-2,6-diaminopimelate = meso-2,6-diaminopimelate. It functions in the pathway amino-acid biosynthesis; L-lysine biosynthesis via DAP pathway; DL-2,6-diaminopimelate from LL-2,6-diaminopimelate: step 1/1. Catalyzes the stereoinversion of LL-2,6-diaminopimelate (L,L-DAP) to meso-diaminopimelate (meso-DAP), a precursor of L-lysine and an essential component of the bacterial peptidoglycan. The chain is Diaminopimelate epimerase from Histophilus somni (strain 2336) (Haemophilus somnus).